A 233-amino-acid chain; its full sequence is 2-phytyl-1,4-naphtoquinone methyltransferase (233 aa).

Belongs to the class I-like SAM-binding methyltransferase superfamily. MenG/UbiE family.

It catalyses the reaction demethylphylloquinol + S-adenosyl-L-methionine = phylloquinol + S-adenosyl-L-homocysteine + H(+). It participates in cofactor biosynthesis; phylloquinone biosynthesis. Functionally, methyltransferase required for the conversion of 2-phytyl-1,4-beta-naphthoquinol to phylloquinol. This Synechococcus elongatus (strain ATCC 33912 / PCC 7942 / FACHB-805) (Anacystis nidulans R2) protein is 2-phytyl-1,4-naphtoquinone methyltransferase.